Here is a 282-residue protein sequence, read N- to C-terminus: ATP synthase gamma chain (282 aa).

This sequence belongs to the ATPase gamma chain family. As to quaternary structure, F-type ATPases have 2 components, CF(1) - the catalytic core - and CF(0) - the membrane proton channel. CF(1) has five subunits: alpha(3), beta(3), gamma(1), delta(1), epsilon(1). CF(0) has three main subunits: a, b and c.

It is found in the cell membrane. In terms of biological role, produces ATP from ADP in the presence of a proton gradient across the membrane. The gamma chain is believed to be important in regulating ATPase activity and the flow of protons through the CF(0) complex. This is ATP synthase gamma chain from Clostridium botulinum (strain Okra / Type B1).